Consider the following 247-residue polypeptide: TM2 domain-containing protein 3 (247 aa).

The signal sequence occupies residues 1–30 (MDLMMALKRVCRVLLFVTQMYVFSGRGSLS). At 31–179 (FEYSQPVAQP…RTFPKMLYCN (149 aa)) the chain is on the extracellular side. 6 N-linked (GlcNAc...) asparagine glycosylation sites follow: Asn87, Asn99, Asn139, Asn155, Asn169, and Asn179. The chain crosses the membrane as a helical span at residues 180-200 (WTGGYKWSTALALSITLGGFG). Residues 183-231 (GYKWSTALALSITLGGFGADRFYLGQWREGLGKLFSFGGLGIWTLIDVF) form the TM2 domain. The Cytoplasmic portion of the chain corresponds to 201–215 (ADRFYLGQWREGLGK). Residues 216–236 (LFSFGGLGIWTLIDVFLISVG) traverse the membrane as a helical segment. Topologically, residues 237-247 (YVGPADGSLYI) are extracellular.

Belongs to the TM2 family.

The protein localises to the membrane. This is TM2 domain-containing protein 3 (tm2d3) from Xenopus laevis (African clawed frog).